The primary structure comprises 208 residues: Sodium/potassium-transporting ATPase subunit beta-1-interacting protein 2 (208 aa).

The next 4 helical transmembrane spans lie at 1 to 23, 35 to 55, 62 to 82, and 153 to 173; these read MGYC…CVLE, APIL…FGTI, ITGY…VICF, and LQIV…KCIT.

The protein belongs to the NKAIN family. As to quaternary structure, interacts with ATP1B1. As to expression, expressed in fetal brain. Weakly expressed in adult brain and thymus. Not expressed in any other normal tissue examined.

It localises to the cell membrane. The polypeptide is Sodium/potassium-transporting ATPase subunit beta-1-interacting protein 2 (NKAIN2) (Homo sapiens (Human)).